A 209-amino-acid polypeptide reads, in one-letter code: Uracil phosphoribosyltransferase (209 aa).

Residues Arg-79, Arg-104, and 131-139 (DPMLATGGS) contribute to the 5-phospho-alpha-D-ribose 1-diphosphate site. Uracil contacts are provided by residues Ile-194 and 199-201 (GDA). Asp-200 contributes to the 5-phospho-alpha-D-ribose 1-diphosphate binding site.

The protein belongs to the UPRTase family. The cofactor is Mg(2+).

It carries out the reaction UMP + diphosphate = 5-phospho-alpha-D-ribose 1-diphosphate + uracil. It functions in the pathway pyrimidine metabolism; UMP biosynthesis via salvage pathway; UMP from uracil: step 1/1. Its activity is regulated as follows. Allosterically activated by GTP. Its function is as follows. Catalyzes the conversion of uracil and 5-phospho-alpha-D-ribose 1-diphosphate (PRPP) to UMP and diphosphate. This Clostridioides difficile (strain 630) (Peptoclostridium difficile) protein is Uracil phosphoribosyltransferase.